The chain runs to 132 residues: Ribosome-binding factor A (132 aa).

It belongs to the RbfA family. Monomer. Binds 30S ribosomal subunits, but not 50S ribosomal subunits or 70S ribosomes.

The protein localises to the cytoplasm. In terms of biological role, one of several proteins that assist in the late maturation steps of the functional core of the 30S ribosomal subunit. Associates with free 30S ribosomal subunits (but not with 30S subunits that are part of 70S ribosomes or polysomes). Required for efficient processing of 16S rRNA. May interact with the 5'-terminal helix region of 16S rRNA. This is Ribosome-binding factor A from Rhizorhabdus wittichii (strain DSM 6014 / CCUG 31198 / JCM 15750 / NBRC 105917 / EY 4224 / RW1) (Sphingomonas wittichii).